The primary structure comprises 85 residues: Small ribosomal subunit protein uS17 (85 aa).

The protein belongs to the universal ribosomal protein uS17 family. Part of the 30S ribosomal subunit.

Its function is as follows. One of the primary rRNA binding proteins, it binds specifically to the 5'-end of 16S ribosomal RNA. This is Small ribosomal subunit protein uS17 from Mycoplasma capricolum subsp. capricolum (strain California kid / ATCC 27343 / NCTC 10154).